Consider the following 373-residue polypeptide: Structure-specific endonuclease subunit EME2 (373 aa).

A disordered region spans residues 24-52 (RPQTWEISDSDGEGVPAREVGTQAPSPAG). Positions 47–260 (APSPAGERRA…LPSKQHRDSQ (214 aa)) are nuclease-like domain; forms the post-nick DNA binding interface and is involved in DNA recognition and bending. Positions 282-373 (GLRGVWWRQI…NPDLLLDLSS (92 aa)) are helix-hairpin-helix (2HhH); forms the pre-nick DNA binding interface and is involved in DNA recognition and bending.

Belongs to the EME1/MMS4 family. In terms of assembly, part of the heterodimeric MUS81-EME2 complex; the complex forms specifically during the DNA replication phase of the cell cycle.

It is found in the nucleus. Non-catalytic subunit of the structure-specific, heterodimeric DNA endonuclease MUS81-EME2 which is involved in the maintenance of genome stability. In the complex, EME2 is required for DNA cleavage, participating in DNA recognition and bending. MUS81-EME2 cleaves 3'-flaps and nicked Holliday junctions, and exhibit limited endonuclease activity with 5' flaps and nicked double-stranded DNAs. MUS81-EME2 which is active during the replication of DNA is more specifically involved in replication fork processing. Replication forks frequently encounter obstacles to their passage, including DNA base lesions, DNA interstrand cross-links, difficult-to-replicate sequences, transcription bubbles, or tightly bound proteins. One mechanism for the restart of a stalled replication fork involves nucleolytic cleavage mediated by the MUS81-EME2 endonuclease. By acting upon the stalled fork, MUS81-EME2 generates a DNA double-strand break (DSB) that can be repaired by homologous recombination, leading to the restoration of an active fork. MUS81-EME2 could also function in telomere maintenance. In Mus musculus (Mouse), this protein is Structure-specific endonuclease subunit EME2.